Here is a 349-residue protein sequence, read N- to C-terminus: Ion-translocating oxidoreductase complex subunit D (349 aa).

A run of 4 helical transmembrane segments spans residues 20–40, 42–62, 83–105, and 120–140; these read IMFL…YFFG, GVLI…IIIL, VLLG…CFFA, and IFNP…VHMT. Thr-184 carries the post-translational modification FMN phosphoryl threonine. 5 helical membrane-spanning segments follow: residues 212-232, 236-256, 263-283, 291-311, and 319-339; these read IVSI…CFLL, VICW…SSIT, FFCS…AFFI, SCTK…VWII, and DGIA…DAYL.

It belongs to the NqrB/RnfD family. The complex is composed of six subunits: RnfA, RnfB, RnfC, RnfD, RnfE and RnfG. Requires FMN as cofactor.

The protein resides in the cell inner membrane. Its function is as follows. Part of a membrane-bound complex that couples electron transfer with translocation of ions across the membrane. This is Ion-translocating oxidoreductase complex subunit D from Buchnera aphidicola subsp. Schizaphis graminum (strain Sg).